The following is a 492-amino-acid chain: Glutamyl-tRNA(Gln) amidotransferase subunit A (492 aa).

Active-site charge relay system residues include K79 and S154. S178 functions as the Acyl-ester intermediate in the catalytic mechanism.

Belongs to the amidase family. GatA subfamily. Heterotrimer of A, B and C subunits.

It carries out the reaction L-glutamyl-tRNA(Gln) + L-glutamine + ATP + H2O = L-glutaminyl-tRNA(Gln) + L-glutamate + ADP + phosphate + H(+). Its function is as follows. Allows the formation of correctly charged Gln-tRNA(Gln) through the transamidation of misacylated Glu-tRNA(Gln) in organisms which lack glutaminyl-tRNA synthetase. The reaction takes place in the presence of glutamine and ATP through an activated gamma-phospho-Glu-tRNA(Gln). This Acinetobacter baumannii (strain ATCC 17978 / DSM 105126 / CIP 53.77 / LMG 1025 / NCDC KC755 / 5377) protein is Glutamyl-tRNA(Gln) amidotransferase subunit A.